We begin with the raw amino-acid sequence, 139 residues long: 6,7-dimethyl-8-ribityllumazine synthase (139 aa).

5-amino-6-(D-ribitylamino)uracil contacts are provided by residues F13, 45–47 (VFD), and 69–71 (AVI). 74–75 (AT) is a binding site for (2S)-2-hydroxy-3-oxobutyl phosphate. H77 serves as the catalytic Proton donor. L102 is a 5-amino-6-(D-ribitylamino)uracil binding site. R117 lines the (2S)-2-hydroxy-3-oxobutyl phosphate pocket.

This sequence belongs to the DMRL synthase family.

The enzyme catalyses (2S)-2-hydroxy-3-oxobutyl phosphate + 5-amino-6-(D-ribitylamino)uracil = 6,7-dimethyl-8-(1-D-ribityl)lumazine + phosphate + 2 H2O + H(+). It participates in cofactor biosynthesis; riboflavin biosynthesis; riboflavin from 2-hydroxy-3-oxobutyl phosphate and 5-amino-6-(D-ribitylamino)uracil: step 1/2. Functionally, catalyzes the formation of 6,7-dimethyl-8-ribityllumazine by condensation of 5-amino-6-(D-ribitylamino)uracil with 3,4-dihydroxy-2-butanone 4-phosphate. This is the penultimate step in the biosynthesis of riboflavin. The polypeptide is 6,7-dimethyl-8-ribityllumazine synthase (Methanothermobacter thermautotrophicus (strain ATCC 29096 / DSM 1053 / JCM 10044 / NBRC 100330 / Delta H) (Methanobacterium thermoautotrophicum)).